We begin with the raw amino-acid sequence, 246 residues long: UDP-N-acetyl-D-mannosaminuronic acid transferase (246 aa).

It belongs to the glycosyltransferase 26 family.

The enzyme catalyses UDP-N-acetyl-alpha-D-mannosaminouronate + N-acetyl-alpha-D-glucosaminyl-di-trans,octa-cis-undecaprenyl diphosphate = beta-D-ManNAcA-(1-&gt;4)-alpha-D-GlcNAc-di-trans,octa-cis-undecaprenyl diphosphate + UDP + H(+). The protein operates within bacterial outer membrane biogenesis; enterobacterial common antigen biosynthesis. In terms of biological role, catalyzes the synthesis of Und-PP-GlcNAc-ManNAcA (Lipid II), the second lipid-linked intermediate involved in enterobacterial common antigen (ECA) synthesis. The chain is UDP-N-acetyl-D-mannosaminuronic acid transferase from Salmonella dublin (strain CT_02021853).